The sequence spans 275 residues: NH(3)-dependent NAD(+) synthetase (275 aa).

Residue 47-54 (GMSGGQDS) participates in ATP binding. D53 serves as a coordination point for Mg(2+). Residue R141 participates in deamido-NAD(+) binding. ATP is bound at residue T161. E166 lines the Mg(2+) pocket. Residues K174 and D181 each coordinate deamido-NAD(+). ATP-binding residues include K190 and T212. Position 261 to 262 (261 to 262 (HK)) interacts with deamido-NAD(+).

This sequence belongs to the NAD synthetase family. As to quaternary structure, homodimer.

The catalysed reaction is deamido-NAD(+) + NH4(+) + ATP = AMP + diphosphate + NAD(+) + H(+). The protein operates within cofactor biosynthesis; NAD(+) biosynthesis; NAD(+) from deamido-NAD(+) (ammonia route): step 1/1. Functionally, catalyzes the ATP-dependent amidation of deamido-NAD to form NAD. Uses ammonia as a nitrogen source. The polypeptide is NH(3)-dependent NAD(+) synthetase (Oceanobacillus iheyensis (strain DSM 14371 / CIP 107618 / JCM 11309 / KCTC 3954 / HTE831)).